We begin with the raw amino-acid sequence, 205 residues long: Small ribosomal subunit protein uS7 (205 aa).

This sequence belongs to the universal ribosomal protein uS7 family. In terms of assembly, part of the 30S ribosomal subunit.

Functionally, one of the primary rRNA binding proteins, it binds directly to 16S rRNA where it nucleates assembly of the head domain of the 30S subunit. Is located at the subunit interface close to the decoding center. This is Small ribosomal subunit protein uS7 from Aeropyrum pernix (strain ATCC 700893 / DSM 11879 / JCM 9820 / NBRC 100138 / K1).